The chain runs to 285 residues: Acetyl-coenzyme A carboxylase carboxyl transferase subunit beta (285 aa).

Positions 22–285 (LWTKCEACGA…HPGVAYAPGV (264 aa)) constitute a CoA carboxyltransferase N-terminal domain. Zn(2+)-binding residues include cysteine 26, cysteine 29, cysteine 45, and cysteine 48. The C4-type zinc-finger motif lies at 26–48 (CEACGAQIYKKEFQENLHVCPKC).

Belongs to the AccD/PCCB family. As to quaternary structure, acetyl-CoA carboxylase is a heterohexamer composed of biotin carboxyl carrier protein (AccB), biotin carboxylase (AccC) and two subunits each of ACCase subunit alpha (AccA) and ACCase subunit beta (AccD). Zn(2+) serves as cofactor.

It localises to the cytoplasm. It carries out the reaction N(6)-carboxybiotinyl-L-lysyl-[protein] + acetyl-CoA = N(6)-biotinyl-L-lysyl-[protein] + malonyl-CoA. It participates in lipid metabolism; malonyl-CoA biosynthesis; malonyl-CoA from acetyl-CoA: step 1/1. In terms of biological role, component of the acetyl coenzyme A carboxylase (ACC) complex. Biotin carboxylase (BC) catalyzes the carboxylation of biotin on its carrier protein (BCCP) and then the CO(2) group is transferred by the transcarboxylase to acetyl-CoA to form malonyl-CoA. The sequence is that of Acetyl-coenzyme A carboxylase carboxyl transferase subunit beta from Thermus thermophilus (strain ATCC 27634 / DSM 579 / HB8).